The following is a 202-amino-acid chain: LexA repressor (202 aa).

Active-site for autocatalytic cleavage activity residues include Ser-123 and Lys-159.

This sequence belongs to the peptidase S24 family. As to quaternary structure, homodimer.

It catalyses the reaction Hydrolysis of Ala-|-Gly bond in repressor LexA.. Functionally, binds the consensus sequence 5'-TGTTC-N(4)-GAACA-3'; some genes have a tandem consensus sequence, at high concentrations their binding is cooperative. Binds to the promoters of a number of genes, including dinB, imuA, lexA, recA, recQ, splB and uvrA. Represses a number of genes involved in the response to DNA damage (SOS response). In the presence of single-stranded DNA, RecA interacts with LexA causing an autocatalytic cleavage which disrupts the DNA-binding part of LexA, leading to derepression of the SOS regulon and eventually DNA repair. The protein is LexA repressor of Verrucomicrobium spinosum (strain ATCC 43997 / DSM 4136 / JCM 18804 / IFAM 1439).